The chain runs to 603 residues: NADH-ubiquinone oxidoreductase chain 5 (603 aa).

The next 17 membrane-spanning stretches (helical) occupy residues 4–24 (YATMTTLALTSLIPPILTTFI), 38–58 (SIVASTFIISLFPTTMFLCLD), 87–107 (MMFIPVALFVTWSIMEFSLWY), 114–134 (INQFFKYLLIFLITMLILVTA), 140–160 (LFIGWEGVGIMSFLLIGWWYA), 171–191 (AILYNRIGDIGFILALAWFLL), 210–230 (LIPLLGFLLAAAGKSAQLGLH), 241–261 (TPVSALLHSSTMVVAGVFLLI), 272–292 (LAQTLTLCLGAITTLFAAVCA), 301–320 (IVAFSTSSQLGLMVATIGIG), 325–347 (AFLHICTHAFFKAMLFMCSGSII), 370–390 (STSLAIGSLALMGMPFLTGFY), 407–429 (WALSIILIATSLTSAYSTRMILL), 457–477 (LTIGSLFAGFFITNNILPTSV), 482–502 (IPLYLKLTALSITLLGLLTAL), 537–557 (IPYLGLLMSQNLPLLLLDLIW), and 582–602 (GLIKLYFLSFFFPLLLILLLI).

It belongs to the complex I subunit 5 family. As to quaternary structure, core subunit of respiratory chain NADH dehydrogenase (Complex I) which is composed of 45 different subunits.

It is found in the mitochondrion inner membrane. It carries out the reaction a ubiquinone + NADH + 5 H(+)(in) = a ubiquinol + NAD(+) + 4 H(+)(out). In terms of biological role, core subunit of the mitochondrial membrane respiratory chain NADH dehydrogenase (Complex I) which catalyzes electron transfer from NADH through the respiratory chain, using ubiquinone as an electron acceptor. Essential for the catalytic activity and assembly of complex I. The chain is NADH-ubiquinone oxidoreductase chain 5 (MT-ND5) from Gorilla gorilla gorilla (Western lowland gorilla).